The chain runs to 296 residues: Ribosomal RNA small subunit methyltransferase H (296 aa).

Residues glycine 38 to histidine 40, glutamate 57, phenylalanine 80, aspartate 103, and histidine 110 contribute to the S-adenosyl-L-methionine site.

Belongs to the methyltransferase superfamily. RsmH family.

Its subcellular location is the cytoplasm. It carries out the reaction cytidine(1402) in 16S rRNA + S-adenosyl-L-methionine = N(4)-methylcytidine(1402) in 16S rRNA + S-adenosyl-L-homocysteine + H(+). In terms of biological role, specifically methylates the N4 position of cytidine in position 1402 (C1402) of 16S rRNA. In Borrelia garinii subsp. bavariensis (strain ATCC BAA-2496 / DSM 23469 / PBi) (Borreliella bavariensis), this protein is Ribosomal RNA small subunit methyltransferase H.